The following is a 306-amino-acid chain: Agmatinase (306 aa).

6 residues coordinate Mn(2+): histidine 126, aspartate 149, histidine 151, aspartate 153, aspartate 230, and aspartate 232.

This sequence belongs to the arginase family. Agmatinase subfamily. Requires Mn(2+) as cofactor.

It catalyses the reaction agmatine + H2O = urea + putrescine. Its pathway is amine and polyamine biosynthesis; putrescine biosynthesis via agmatine pathway; putrescine from agmatine: step 1/1. Its function is as follows. Catalyzes the formation of putrescine from agmatine. In Escherichia coli (strain K12 / DH10B), this protein is Agmatinase.